A 174-amino-acid polypeptide reads, in one-letter code: Shikimate kinase (174 aa).

15–20 (GTGKST) provides a ligand contact to ATP. Serine 19 provides a ligand contact to Mg(2+). Residues aspartate 37, arginine 61, and glycine 82 each contribute to the substrate site. Position 120 (arginine 120) interacts with ATP. Residue arginine 138 participates in substrate binding.

The protein belongs to the shikimate kinase family. Monomer. Mg(2+) is required as a cofactor.

The protein localises to the cytoplasm. It carries out the reaction shikimate + ATP = 3-phosphoshikimate + ADP + H(+). Its pathway is metabolic intermediate biosynthesis; chorismate biosynthesis; chorismate from D-erythrose 4-phosphate and phosphoenolpyruvate: step 5/7. Its function is as follows. Catalyzes the specific phosphorylation of the 3-hydroxyl group of shikimic acid using ATP as a cosubstrate. The protein is Shikimate kinase of Staphylococcus aureus (strain MRSA252).